Reading from the N-terminus, the 412-residue chain is Methylmalonic aciduria type A homolog, mitochondrial (412 aa).

The N-terminal 15 residues, 1–15, are a transit peptide targeting the mitochondrion; it reads MVVRALVRAHPLSRI. GTP contacts are provided by residues 132 to 140, D275, and 311 to 313; these read GSPGVGKSS and SIM.

This sequence belongs to the SIMIBI class G3E GTPase family. ArgK/MeaB subfamily.

Its subcellular location is the mitochondrion. Its function is as follows. May have GTPase activity. May also bind and hydrolyze ATP. May function as chaperone. Likely to have a role in propionyl-CoA metabolism and adenosylcobalamin synthesis. The protein is Methylmalonic aciduria type A homolog, mitochondrial of Caenorhabditis briggsae.